An 83-amino-acid chain; its full sequence is DNA-directed RNA polymerase subunit Rpo5 (83 aa).

Belongs to the archaeal Rpo5/eukaryotic RPB5 RNA polymerase subunit family. Part of the RNA polymerase complex.

The protein resides in the cytoplasm. It carries out the reaction RNA(n) + a ribonucleoside 5'-triphosphate = RNA(n+1) + diphosphate. Its function is as follows. DNA-dependent RNA polymerase (RNAP) catalyzes the transcription of DNA into RNA using the four ribonucleoside triphosphates as substrates. This chain is DNA-directed RNA polymerase subunit Rpo5, found in Metallosphaera sedula (strain ATCC 51363 / DSM 5348 / JCM 9185 / NBRC 15509 / TH2).